A 460-amino-acid chain; its full sequence is Muscarinic acetylcholine receptor M1 (460 aa).

Over 1–22 (MNTSAPPAVSPNITVLAPGKGP) the chain is Extracellular. N-linked (GlcNAc...) asparagine glycans are attached at residues Asn-2 and Asn-12. The chain crosses the membrane as a helical span at residues 23-48 (WQVAFIGITTGLLSLATVTGNLLVLI). Over 49 to 62 (SFKVNTELKTVNNY) the chain is Cytoplasmic. The chain crosses the membrane as a helical span at residues 63–84 (FLLSLACADLIIGTFSMNLYTT). Residues 85-95 (YLLMGHWALGT) are Extracellular-facing. Residues 96–121 (LACDLWLALDYVASNASVMNLLLISF) traverse the membrane as a helical segment. Cys-98 and Cys-178 form a disulfide bridge. Residues 122–142 (DRYFSVTRPLSYRAKRTPRRA) lie on the Cytoplasmic side of the membrane. The helical transmembrane segment at 143 to 164 (ALMIGLAWLVSFVLWAPAILFW) threads the bilayer. The Extracellular segment spans residues 165 to 185 (QYLVGERTVLAGQCYIQFLSQ). Residues 186-209 (PIITFGTAMAAFYLPVTVMCTLYW) form a helical membrane-spanning segment. Residues 210–366 (RIYRETESRA…LVKEKKAART (157 aa)) are Cytoplasmic-facing. Disordered stretches follow at residues 225-256 (LQGS…GTPP), 274-297 (WKEE…EEPG), and 310-351 (EAQA…QLAK). Position 230 is a phosphothreonine (Thr-230). Positions 238-247 (SSSSERSQPG) are enriched in low complexity. Basic residues predominate over residues 328–343 (RPTKKGRDRAGKGQKP). The chain crosses the membrane as a helical span at residues 367–390 (LSAILLAFILTWTPYNIMVLVSTF). Residues 391–397 (CKDCVPE) lie on the Extracellular side of the membrane. A helical transmembrane segment spans residues 398–420 (TLWELGYWLCYVNSTINPMCYAL). The Cytoplasmic portion of the chain corresponds to 421–460 (CNKAFRDTFRLLLLCRWDKRRWRKIPKRPGSVHRTPSRQC). A Phosphothreonine modification is found at Thr-428. Ser-451 is subject to Phosphoserine. A Phosphothreonine modification is found at Thr-455. A Phosphoserine modification is found at Ser-457.

Belongs to the G-protein coupled receptor 1 family. Muscarinic acetylcholine receptor subfamily. CHRM1 sub-subfamily. In terms of assembly, interacts with GPRASP2. Interacts with TMEM147.

Its subcellular location is the cell membrane. The protein resides in the postsynaptic cell membrane. Functionally, the muscarinic acetylcholine receptor mediates various cellular responses, including inhibition of adenylate cyclase, breakdown of phosphoinositides and modulation of potassium channels through the action of G proteins. Primary transducing effect is Pi turnover. This chain is Muscarinic acetylcholine receptor M1 (CHRM1), found in Pongo abelii (Sumatran orangutan).